The primary structure comprises 502 residues: ATP synthase subunit beta, chloroplastic (502 aa).

The residue at position 17 (S17) is a Phosphoserine. 176–183 (GGAGVGKT) is an ATP binding site.

The protein belongs to the ATPase alpha/beta chains family. F-type ATPases have 2 components, CF(1) - the catalytic core - and CF(0) - the membrane proton channel. CF(1) has five subunits: alpha(3), beta(3), gamma(1), delta(1), epsilon(1). CF(0) has four main subunits: a(1), b(1), b'(1) and c(9-12).

The protein localises to the plastid. It is found in the chloroplast thylakoid membrane. The catalysed reaction is ATP + H2O + 4 H(+)(in) = ADP + phosphate + 5 H(+)(out). In terms of biological role, produces ATP from ADP in the presence of a proton gradient across the membrane. The catalytic sites are hosted primarily by the beta subunits. The sequence is that of ATP synthase subunit beta, chloroplastic from Lepidium virginicum (Virginia pepperweed).